A 218-amino-acid chain; its full sequence is Adenylate kinase (218 aa).

11–16 (GAGKGT) serves as a coordination point for ATP. The interval 31 to 60 (STGDMFREAMANKTKVGLEAKSYIDKGNLV) is NMP. Residues Thr-32, Arg-37, 58 to 60 (NLV), 86 to 89 (GFPR), and Gln-93 contribute to the AMP site. Residues 127–165 (ARYMCKNCGATYNKISKQPKVEGTCDRCGSHEFYQREDD) form an LID region. Arg-128 is a binding site for ATP. Zn(2+) is bound by residues Cys-131 and Cys-134. 137 to 138 (TY) serves as a coordination point for ATP. Cys-151 and Cys-154 together coordinate Zn(2+). Residues Arg-162 and Arg-173 each coordinate AMP. Gln-201 lines the ATP pocket.

It belongs to the adenylate kinase family. In terms of assembly, monomer.

Its subcellular location is the cytoplasm. It carries out the reaction AMP + ATP = 2 ADP. It participates in purine metabolism; AMP biosynthesis via salvage pathway; AMP from ADP: step 1/1. Its function is as follows. Catalyzes the reversible transfer of the terminal phosphate group between ATP and AMP. Plays an important role in cellular energy homeostasis and in adenine nucleotide metabolism. This Lactobacillus acidophilus (strain ATCC 700396 / NCK56 / N2 / NCFM) protein is Adenylate kinase.